A 349-amino-acid chain; its full sequence is Isopentenyl-diphosphate delta-isomerase (349 aa).

6–7 (RK) provides a ligand contact to substrate. Residues 62 to 64 (AMT), Ser-93, and Asn-122 each bind FMN. Gln-152 contributes to the substrate binding site. Position 153 (Glu-153) interacts with Mg(2+). FMN is bound by residues Lys-184, Thr-214, 258–259 (GG), and 280–281 (AG).

This sequence belongs to the IPP isomerase type 2 family. In terms of assembly, homooctamer. Dimer of tetramers. FMN is required as a cofactor. The cofactor is NADPH. Mg(2+) serves as cofactor.

It is found in the cytoplasm. It catalyses the reaction isopentenyl diphosphate = dimethylallyl diphosphate. Involved in the biosynthesis of isoprenoids. Catalyzes the 1,3-allylic rearrangement of the homoallylic substrate isopentenyl (IPP) to its allylic isomer, dimethylallyl diphosphate (DMAPP). In Bacillus mycoides (strain KBAB4) (Bacillus weihenstephanensis), this protein is Isopentenyl-diphosphate delta-isomerase.